Reading from the N-terminus, the 499-residue chain is Maturase K (499 aa).

This sequence belongs to the intron maturase 2 family. MatK subfamily.

It is found in the plastid. The protein localises to the chloroplast. Functionally, usually encoded in the trnK tRNA gene intron. Probably assists in splicing its own and other chloroplast group II introns. The chain is Maturase K from Neltuma juliflora (Mesquite).